Reading from the N-terminus, the 190-residue chain is uncharacterized protein (190 aa).

Disordered regions lie at residues 1-21 (MALRGHPEPQPTNTPLSATVG) and 155-190 (PEMGQNESLSEERKGHESKRKSGGRGSPSSHPTQAS). Residues 181–190 (SPSSHPTQAS) show a composition bias toward low complexity.

This is an uncharacterized protein from Homo sapiens (Human).